The chain runs to 875 residues: Phosphatidylinositol 3-kinase VPS34 (875 aa).

One can recognise a C2 PI3K-type domain in the interval 14–188; the sequence is LDVPLKVKIK…WLDEITISKL (175 aa). The PIK helical domain maps to 293–526; that stretch reads LDKQVKPDIK…SSFWSRLDKK (234 aa). In terms of domain architecture, PI3K/PI4K catalytic spans 593-859; the sequence is CPETSKVFKS…LINDSVNALL (267 aa). Residues 599 to 605 are G-loop; it reads VFKSSLS. The segment at 728 to 736 is catalytic loop; sequence GVGDRHLDN. The interval 747–768 is activation loop; it reads HADFGYILGQDPKPFPPLMKLP.

Belongs to the PI3/PI4-kinase family. As to quaternary structure, component of the autophagy-specific VPS34 PI3-kinase complex I composed of VPS15, VPS30, VPS34, ATG14 and ATG38, and of the VPS34 PI3-kinase complex II composed of VPS15, VPS30, VPS34 and VPS38. Interacts directly with ATG38. Interacts directly with VPS34. Autophosphorylated. Might also be phosphorylated by VPS15.

It is found in the golgi apparatus. It localises to the trans-Golgi network membrane. Its subcellular location is the endosome membrane. It carries out the reaction a 1,2-diacyl-sn-glycero-3-phospho-(1D-myo-inositol) + ATP = a 1,2-diacyl-sn-glycero-3-phospho-(1D-myo-inositol-3-phosphate) + ADP + H(+). With respect to regulation, phosphatidylinositol 3-kinase activity is directly dependent on VPS15 protein kinase activity. Phosphatidylinositol 3-kinase required for cytoplasm to vacuole transport (Cvt) and autophagy as a part of the autophagy-specific VPS34 PI3-kinase complex I. This complex is essential to recruit the ATG8-phosphatidylinositol conjugate and the ATG12-ATG5 conjugate to the pre-autophagosomal structure. Also involved in endosome-to-Golgi retrograde transport as part of the VPS34 PI3-kinase complex II. This second complex is required for the endosome-to-Golgi retrieval of PEP1 and KEX2, and the recruitment of VPS5 and VPS7, two components of the retromer complex, to endosomal membranes (probably through the synthesis of a specific pool of phosphatidylinositol 3-phosphate recruiting the retromer to the endosomes). Its activation by VPS15 may lead to the phosphorylation of phosphatidylinositol in the sorting compartment membrane. Finally, it might also be involved in ethanol tolerance and cell wall integrity. In Saccharomyces cerevisiae (strain ATCC 204508 / S288c) (Baker's yeast), this protein is Phosphatidylinositol 3-kinase VPS34 (VPS34).